The chain runs to 1209 residues: ATP-dependent helicase/nuclease subunit A (1209 aa).

The region spanning 9 to 482 (SQWTDEQWQA…IDLAKNFRSR (474 aa)) is the UvrD-like helicase ATP-binding domain. 30–37 (AAAGSGKT) contributes to the ATP binding site. Residues 510–798 (AALRFGAQDY…RMMTIHKSKG (289 aa)) form the UvrD-like helicase C-terminal domain.

The protein belongs to the helicase family. AddA subfamily. Heterodimer of AddA and AddB/RexB. Mg(2+) serves as cofactor.

The enzyme catalyses Couples ATP hydrolysis with the unwinding of duplex DNA by translocating in the 3'-5' direction.. It carries out the reaction ATP + H2O = ADP + phosphate + H(+). The heterodimer acts as both an ATP-dependent DNA helicase and an ATP-dependent, dual-direction single-stranded exonuclease. Recognizes the chi site generating a DNA molecule suitable for the initiation of homologous recombination. The AddA nuclease domain is required for chi fragment generation; this subunit has the helicase and 3' -&gt; 5' nuclease activities. The protein is ATP-dependent helicase/nuclease subunit A of Anoxybacillus flavithermus (strain DSM 21510 / WK1).